A 165-amino-acid polypeptide reads, in one-letter code: 6,7-dimethyl-8-ribityllumazine synthase (165 aa).

Residues F24, A62–E64, and A86–I88 contribute to the 5-amino-6-(D-ribitylamino)uracil site. D91–T92 is a binding site for (2S)-2-hydroxy-3-oxobutyl phosphate. H94 (proton donor) is an active-site residue. F119 serves as a coordination point for 5-amino-6-(D-ribitylamino)uracil. R133 contributes to the (2S)-2-hydroxy-3-oxobutyl phosphate binding site.

The protein belongs to the DMRL synthase family.

The catalysed reaction is (2S)-2-hydroxy-3-oxobutyl phosphate + 5-amino-6-(D-ribitylamino)uracil = 6,7-dimethyl-8-(1-D-ribityl)lumazine + phosphate + 2 H2O + H(+). Its pathway is cofactor biosynthesis; riboflavin biosynthesis; riboflavin from 2-hydroxy-3-oxobutyl phosphate and 5-amino-6-(D-ribitylamino)uracil: step 1/2. In terms of biological role, catalyzes the formation of 6,7-dimethyl-8-ribityllumazine by condensation of 5-amino-6-(D-ribitylamino)uracil with 3,4-dihydroxy-2-butanone 4-phosphate. This is the penultimate step in the biosynthesis of riboflavin. The polypeptide is 6,7-dimethyl-8-ribityllumazine synthase (Prochlorococcus marinus (strain MIT 9303)).